A 119-amino-acid polypeptide reads, in one-letter code: Phosphoribosyl-AMP cyclohydrolase (119 aa).

Residue D77 coordinates Mg(2+). Position 78 (C78) interacts with Zn(2+). Mg(2+)-binding residues include D79 and D81. Zn(2+)-binding residues include C94 and C101.

The protein belongs to the PRA-CH family. Homodimer. The cofactor is Mg(2+). Zn(2+) serves as cofactor.

It localises to the cytoplasm. The catalysed reaction is 1-(5-phospho-beta-D-ribosyl)-5'-AMP + H2O = 1-(5-phospho-beta-D-ribosyl)-5-[(5-phospho-beta-D-ribosylamino)methylideneamino]imidazole-4-carboxamide. It participates in amino-acid biosynthesis; L-histidine biosynthesis; L-histidine from 5-phospho-alpha-D-ribose 1-diphosphate: step 3/9. Catalyzes the hydrolysis of the adenine ring of phosphoribosyl-AMP. This is Phosphoribosyl-AMP cyclohydrolase from Cereibacter sphaeroides (strain ATCC 17025 / ATH 2.4.3) (Rhodobacter sphaeroides).